A 193-amino-acid chain; its full sequence is Capsid protein (193 aa).

Its subcellular location is the virion. The protein is Capsid protein of Apple chlorotic leaf spot virus (isolate apple) (ACLSV).